Reading from the N-terminus, the 183-residue chain is Large ribosomal subunit protein uL6 (183 aa).

This sequence belongs to the universal ribosomal protein uL6 family. Part of the 50S ribosomal subunit.

Its function is as follows. This protein binds to the 23S rRNA, and is important in its secondary structure. It is located near the subunit interface in the base of the L7/L12 stalk, and near the tRNA binding site of the peptidyltransferase center. The polypeptide is Large ribosomal subunit protein uL6 (Ruminiclostridium cellulolyticum (strain ATCC 35319 / DSM 5812 / JCM 6584 / H10) (Clostridium cellulolyticum)).